A 281-amino-acid chain; its full sequence is Pantothenate synthetase (281 aa).

An ATP-binding site is contributed by 30 to 37; the sequence is MGYLHEGH. The Proton donor role is filled by His37. Position 60 (Gln60) interacts with (R)-pantoate. Residue Gln60 participates in beta-alanine binding. 146-149 provides a ligand contact to ATP; that stretch reads GEKD. A (R)-pantoate-binding site is contributed by Gln152. Residues Ile175 and 183–186 each bind ATP; that span reads KSSR.

The protein belongs to the pantothenate synthetase family. As to quaternary structure, homodimer.

The protein localises to the cytoplasm. It carries out the reaction (R)-pantoate + beta-alanine + ATP = (R)-pantothenate + AMP + diphosphate + H(+). Its pathway is cofactor biosynthesis; (R)-pantothenate biosynthesis; (R)-pantothenate from (R)-pantoate and beta-alanine: step 1/1. In terms of biological role, catalyzes the condensation of pantoate with beta-alanine in an ATP-dependent reaction via a pantoyl-adenylate intermediate. This Ruminiclostridium cellulolyticum (strain ATCC 35319 / DSM 5812 / JCM 6584 / H10) (Clostridium cellulolyticum) protein is Pantothenate synthetase.